The chain runs to 390 residues: Putative F-box protein At3g52320 (390 aa).

The region spanning 21–71 (VVFLPEIPEEMLIDILIRLPAKSLMRFKCVSKLWLSLITSRYFTNRFFKPS) is the F-box domain.

The chain is Putative F-box protein At3g52320 from Arabidopsis thaliana (Mouse-ear cress).